The chain runs to 122 residues: Large ribosomal subunit protein uL14 (122 aa).

This sequence belongs to the universal ribosomal protein uL14 family. In terms of assembly, part of the 50S ribosomal subunit. Forms a cluster with proteins L3 and L19. In the 70S ribosome, L14 and L19 interact and together make contacts with the 16S rRNA in bridges B5 and B8.

Binds to 23S rRNA. Forms part of two intersubunit bridges in the 70S ribosome. The sequence is that of Large ribosomal subunit protein uL14 from Streptococcus pneumoniae (strain JJA).